Consider the following 441-residue polypeptide: Transcriptional regulatory protein ZraR (441 aa).

Positions D7–L121 constitute a Response regulatory domain. At D56 the chain carries 4-aspartylphosphate. Residues M141–V370 form the Sigma-54 factor interaction domain. Positions 172, 173, 329, and 359 each coordinate ATP. Residues K421–S440 constitute a DNA-binding region (H-T-H motif).

Post-translationally, phosphorylated by ZraS.

The protein resides in the cytoplasm. Its activity is regulated as follows. Activity of the ZraS/ZraR two-component system is repressed by the zinc-bound form of ZraP, which probably interacts with the periplasmic region of ZraS. Part of the Zra signaling pathway, an envelope stress response (ESR) system composed of the periplasmic accessory protein ZraP, the histidine kinase ZraS and the transcriptional regulator ZraR. The ZraPSR system contributes to antibiotic resistance and is important for membrane integrity in the presence of membrane-targeting biocides. ZraR is a member of the two-component regulatory system ZraS/ZraR. When activated by ZraS, acts in conjunction with sigma-54 to regulate the expression of zraP in the presence of high Zn(2+) or Pb(2+) concentrations. Also positively autoregulates the expression of the zraSR operon. This is Transcriptional regulatory protein ZraR (zraR) from Salmonella typhi.